Here is a 391-residue protein sequence, read N- to C-terminus: Inner membrane protein YdcO (391 aa).

The Cytoplasmic segment spans residues 1 to 9 (MRLFSIPPP). Residues 10–30 (TLLAGFLAVLIGYASSAAIIW) traverse the membrane as a helical segment. The Periplasmic segment spans residues 31–42 (QAAIVAGATTAQ). The helical transmembrane segment at 43–63 (ISGWMTALGLAMGVSTLTLTL) threads the bilayer. At 64–93 (WYRVPVLTAWSTPGAALLVTGLQGLTLNEA) the chain is on the cytoplasmic side. A helical membrane pass occupies residues 94 to 114 (IGVFIVTNALIVLCGITGLFA). Over 115–123 (RLMRIIPHS) the chain is Periplasmic. Residues 124 to 144 (LAAAMLAGILLRFGLQAFASL) traverse the membrane as a helical segment. The Cytoplasmic segment spans residues 145 to 167 (DGQFTLCGSMLLVWLATKAVAPR). The helical transmembrane segment at 168 to 188 (YAVIAAMIIGIVIVIAQGDVV) threads the bilayer. The Periplasmic portion of the chain corresponds to 189 to 200 (TTDVVFKPVLPT). Residues 201-221 (YITPDFSFAHSLSVALPLFLV) traverse the membrane as a helical segment. Over 222–246 (TMASQNAPGIAAMKAAGYSAPVSPL) the chain is Cytoplasmic. A helical transmembrane segment spans residues 247-267 (IVFTGLLALVFSPFGVYSVGI). The Periplasmic portion of the chain corresponds to 268 to 287 (AAITAAICQSPEAHPDKDQR). A helical membrane pass occupies residues 288 to 308 (WLAAAVAGIFYLLAGLFGSAI). At 309 to 311 (TGM) the chain is on the cytoplasmic side. Residues 312–332 (MAALPVSWIQMLAGLALLSTI) form a helical membrane-spanning segment. Over 333 to 361 (GGSLYQALHNERERDAAVVAFLVTASGLT) the chain is Periplasmic. The helical transmembrane segment at 362-382 (LVGIGSAFWGLIAGGVCYVVL) threads the bilayer. Topologically, residues 383–391 (NLIADRNRY) are cytoplasmic.

Its subcellular location is the cell inner membrane. The protein is Inner membrane protein YdcO (ydcO) of Escherichia coli (strain K12).